A 596-amino-acid polypeptide reads, in one-letter code: Germinal center kinase 3 (596 aa).

Over residues 1-54 the composition is skewed to low complexity; sequence MSSSNLAGNTNTTTTSSAASAAAAHSAANASTITSEYSTTQTTTGTFNTDTLSS. Residues 1–80 are disordered; it reads MSSSNLAGNT…PPPPPQVSSP (80 aa). Phosphothreonine; by autocatalysis is present on residues Thr13 and Thr32. Positions 67 to 77 are enriched in pro residues; that stretch reads SQPPPPPPPQV. The 279-residue stretch at 108-386 folds into the Protein kinase domain; it reads YKLDESIGVG…ASELLKYSFF (279 aa). Residues 114–122 and Lys137 each bind ATP; that span reads IGVGATATV. Phosphoserine; by autocatalysis is present on Ser190. The active-site Proton acceptor is Asp240. At Thr280 the chain carries Phosphothreonine. Ser405 bears the Phosphoserine; by autocatalysis mark. At Ser419 the chain carries Phosphoserine. The tract at residues 429–496 is disordered; the sequence is NWEFEYDSPQ…EGGGATTPCP (68 aa). Acidic residues predominate over residues 432 to 450; that stretch reads FEYDSPQESDDDSDLEDEE. The span at 466–479 shows a compositional bias: gly residues; it reads GAAGAAGGATGGAA.

The protein belongs to the protein kinase superfamily. STE Ser/Thr protein kinase family. STE20 subfamily. In terms of assembly, interacts (via C-terminus) with clh-3; required for the phosphorylation-mediated inhibition of clh-3 function. Interacts (via C-terminus) with wnk-1; the interaction is direct. In terms of processing, phosphorylated at Thr-280 and Ser-419 probably by wnk-1; phosphorylation results in weak activation. Predominantly autophosphorylated at Thr-32 and Ser-190 and weakly autophosphorylated at Thr-13 and Ser-405 in vitro. Ubiquitously expressed with a higher expression in the excretory cell. Expressed in both male and female germ cells; up-regulated in maturing spermatocytes but absent in mature sperm.

The protein localises to the cytoplasm. Its subcellular location is the nucleus. It carries out the reaction L-seryl-[protein] + ATP = O-phospho-L-seryl-[protein] + ADP + H(+). The catalysed reaction is L-threonyl-[protein] + ATP = O-phospho-L-threonyl-[protein] + ADP + H(+). Plays a role in osmotic stress responses by regulating ion homeostasis and by controlling cell volume via the phosphorylation-mediated inhibition of the chloride channel clh-3. In addition, increases gpdh-1 translation upon osmotic stress, likely downstream of wnk-1. Involved in several developmental processes including the tubular formation of the excretory canals, the formation of the intestine and the progression through larval stages. In addition, required for germ line development by controlling meiosis and chromosomal segregation during spermatogenesis. By controlling clh-3 activity, may regulate the development of the excretory canals and fertility. This chain is Germinal center kinase 3, found in Caenorhabditis elegans.